A 97-amino-acid polypeptide reads, in one-letter code: Small ribosomal subunit protein uS19 (97 aa).

It belongs to the universal ribosomal protein uS19 family.

Protein S19 forms a complex with S13 that binds strongly to the 16S ribosomal RNA. This chain is Small ribosomal subunit protein uS19, found in Pelagibacter ubique (strain HTCC1062).